The sequence spans 143 residues: Protein SLC31A2 (143 aa).

Topologically, residues 1-22 (MAMHFIFSDTAVLLFDFWSVHS) are extracellular. Residues 23–43 (PAGMALSVLVLLLLAVLYEGI) traverse the membrane as a helical segment. Residues 44–93 (KVGKAKLLNQVLVNLPTSISQQTIAETDGDSAGSDSFPVGRTHHRWYLCH) are Cytoplasmic-facing. The residue at position 77 (S77) is a Phosphoserine. The chain crosses the membrane as a helical span at residues 94–114 (FGQSLIHVIQVVIGYFIMLAV). Residues 115-119 (MSYNT) lie on the Extracellular side of the membrane. A helical membrane pass occupies residues 120–140 (WIFLGVVLGSAVGYYLAYPLL). Residues 141-143 (STA) are Cytoplasmic-facing.

Belongs to the copper transporter (Ctr) (TC 1.A.56) family. SLC31A subfamily. In terms of assembly, oligomer. Interacts with SLC31A1; this interaction stabilizes SLC31A2 and protects it from ubiquitination and the subsequent degradation. Ubiquitinated; ubiquitination and the subsequent proteasomal degradation are prevent by SLC31A1 that stabilizes it. In terms of tissue distribution, ubiquitous with high expression in placenta and heart.

It is found in the membrane. The protein resides in the cytoplasmic vesicle membrane. Its subcellular location is the late endosome membrane. It localises to the lysosome membrane. Functionally, does not function as a copper(1+) importer in vivo. However, in vitro functions as a low-affinity copper(1+) importer. Regulator of SLC31A1 which facilitates the cleavage of the SLC31A1 ecto-domain or which stabilizes the truncated form of SLC31A1 (Truncated CTR1 form), thereby drives the SLC31A1 truncated form-dependent endosomal copper export and modulates the copper and cisplatin accumulation via SLC31A1. In Homo sapiens (Human), this protein is Protein SLC31A2.